We begin with the raw amino-acid sequence, 255 residues long: Type III pantothenate kinase (255 aa).

6-13 is a binding site for ATP; sequence DIGNTNTV. Residues Tyr100 and 107–110 contribute to the substrate site; that span reads GADR. Asp109 functions as the Proton acceptor in the catalytic mechanism. Asp129 provides a ligand contact to K(+). Thr132 contacts ATP. Thr185 provides a ligand contact to substrate.

This sequence belongs to the type III pantothenate kinase family. Homodimer. It depends on NH4(+) as a cofactor. K(+) is required as a cofactor.

It localises to the cytoplasm. It catalyses the reaction (R)-pantothenate + ATP = (R)-4'-phosphopantothenate + ADP + H(+). It functions in the pathway cofactor biosynthesis; coenzyme A biosynthesis; CoA from (R)-pantothenate: step 1/5. Catalyzes the phosphorylation of pantothenate (Pan), the first step in CoA biosynthesis. The protein is Type III pantothenate kinase of Desulfosudis oleivorans (strain DSM 6200 / JCM 39069 / Hxd3) (Desulfococcus oleovorans).